Consider the following 398-residue polypeptide: Elongation factor Tu (398 aa).

The region spanning 10–207 (KIHLNVGTIG…ILDKNIPVPN (198 aa)) is the tr-type G domain. Residues 19-26 (GHVDHGKT) form a G1 region. 19 to 26 (GHVDHGKT) contributes to the GTP binding site. Residue threonine 26 participates in Mg(2+) binding. The G2 stretch occupies residues 60 to 64 (GITIS). A G3 region spans residues 81–84 (DCPG). GTP is bound by residues 81–85 (DCPGH) and 136–139 (NKAD). Residues 136–139 (NKAD) form a G4 region. The interval 174–176 (SAL) is G5.

This sequence belongs to the TRAFAC class translation factor GTPase superfamily. Classic translation factor GTPase family. EF-Tu/EF-1A subfamily. In terms of assembly, monomer.

It localises to the cytoplasm. It catalyses the reaction GTP + H2O = GDP + phosphate + H(+). Functionally, GTP hydrolase that promotes the GTP-dependent binding of aminoacyl-tRNA to the A-site of ribosomes during protein biosynthesis. The polypeptide is Elongation factor Tu (Carsonella ruddii (strain PV)).